A 183-amino-acid polypeptide reads, in one-letter code: Glutathione-regulated potassium-efflux system ancillary protein KefG (183 aa).

This sequence belongs to the NAD(P)H dehydrogenase (quinone) family. KefG subfamily. In terms of assembly, interacts with KefB.

It localises to the cell inner membrane. The catalysed reaction is a quinone + NADH + H(+) = a quinol + NAD(+). The enzyme catalyses a quinone + NADPH + H(+) = a quinol + NADP(+). Its function is as follows. Regulatory subunit of a potassium efflux system that confers protection against electrophiles. Required for full activity of KefB. The polypeptide is Glutathione-regulated potassium-efflux system ancillary protein KefG (Yersinia pestis bv. Antiqua (strain Angola)).